The sequence spans 494 residues: Alpha-amylase 1 (494 aa).

The first 18 residues, 1–18 (MFLAKSIVCLALLAVANA), serve as a signal peptide directing secretion. Cys46 and Cys102 are joined by a disulfide. Ca(2+) contacts are provided by Asn116, Arg165, and Asp174. The cysteines at positions 153 and 167 are disulfide-linked. Arg202 contributes to the chloride binding site. The active-site Nucleophile is the Asp204. His208 lines the Ca(2+) pocket. Glu241 serves as the catalytic Proton donor. 2 residues coordinate chloride: Asn304 and Arg343. A disordered region spans residues 350 to 370 (FTDTDQGPPTTDGQNIASPSF). Positions 351–363 (TDTDQGPPTTDGQ) are enriched in low complexity. Disulfide bonds link Cys376/Cys382 and Cys448/Cys460.

This sequence belongs to the glycosyl hydrolase 13 family. In terms of assembly, monomer. The cofactor is Ca(2+). Requires chloride as cofactor.

The enzyme catalyses Endohydrolysis of (1-&gt;4)-alpha-D-glucosidic linkages in polysaccharides containing three or more (1-&gt;4)-alpha-linked D-glucose units.. The polypeptide is Alpha-amylase 1 (Amy35) (Drosophila ananassae (Fruit fly)).